The chain runs to 91 residues: N(2)-fixation sustaining protein CowN (91 aa).

It belongs to the CowN family.

Is required to sustain N(2)-dependent growth in the presence of low levels of carbon monoxide (CO). Probably acts by protecting the N(2) fixation ability of the nitrogenase complex, which is inactivated in the presence of CO. This is N(2)-fixation sustaining protein CowN from Beijerinckia indica subsp. indica (strain ATCC 9039 / DSM 1715 / NCIMB 8712).